The primary structure comprises 150 residues: MRKVMAAKLHGIHVTAADLDYHGSITLDPDHCEKAGLLPLEFVDIWNKNSGARISTYVIFGERYSRCCILNGAAARTCQVGDEIIICSSHYIEAERIADFQPKILTFDKGNHIVETLSYVVERDGTGRYHFDIVNEGGQSLPIPVKAHGR.

The Schiff-base intermediate with substrate; via pyruvic acid role is filled by Ser24. Ser24 carries the post-translational modification Pyruvic acid (Ser). Residue Thr56 participates in substrate binding. Tyr57 serves as the catalytic Proton donor. 72-74 (GAA) contacts substrate.

This sequence belongs to the PanD family. Heterooctamer of four alpha and four beta subunits. The cofactor is pyruvate. Is synthesized initially as an inactive proenzyme, which is activated by self-cleavage at a specific serine bond to produce a beta-subunit with a hydroxyl group at its C-terminus and an alpha-subunit with a pyruvoyl group at its N-terminus.

The protein localises to the cytoplasm. The enzyme catalyses L-aspartate + H(+) = beta-alanine + CO2. Its pathway is cofactor biosynthesis; (R)-pantothenate biosynthesis; beta-alanine from L-aspartate: step 1/1. In terms of biological role, catalyzes the pyruvoyl-dependent decarboxylation of aspartate to produce beta-alanine. This Beijerinckia indica subsp. indica (strain ATCC 9039 / DSM 1715 / NCIMB 8712) protein is Aspartate 1-decarboxylase.